The primary structure comprises 309 residues: Glutaminase (309 aa).

7 residues coordinate substrate: serine 65, asparagine 117, glutamate 162, asparagine 169, tyrosine 193, tyrosine 245, and valine 263.

Belongs to the glutaminase family. Homotetramer.

The enzyme catalyses L-glutamine + H2O = L-glutamate + NH4(+). The protein is Glutaminase of Geobacillus thermodenitrificans (strain NG80-2).